The primary structure comprises 153 residues: 6,7-dimethyl-8-ribityllumazine synthase (153 aa).

Residues phenylalanine 22, 56 to 58 (AFE), and 80 to 82 (TVI) contribute to the 5-amino-6-(D-ribitylamino)uracil site. A (2S)-2-hydroxy-3-oxobutyl phosphate-binding site is contributed by 85-86 (AT). The Proton donor role is filled by histidine 88. Phenylalanine 113 lines the 5-amino-6-(D-ribitylamino)uracil pocket. Arginine 127 is a (2S)-2-hydroxy-3-oxobutyl phosphate binding site.

The protein belongs to the DMRL synthase family.

The enzyme catalyses (2S)-2-hydroxy-3-oxobutyl phosphate + 5-amino-6-(D-ribitylamino)uracil = 6,7-dimethyl-8-(1-D-ribityl)lumazine + phosphate + 2 H2O + H(+). It functions in the pathway cofactor biosynthesis; riboflavin biosynthesis; riboflavin from 2-hydroxy-3-oxobutyl phosphate and 5-amino-6-(D-ribitylamino)uracil: step 1/2. In terms of biological role, catalyzes the formation of 6,7-dimethyl-8-ribityllumazine by condensation of 5-amino-6-(D-ribitylamino)uracil with 3,4-dihydroxy-2-butanone 4-phosphate. This is the penultimate step in the biosynthesis of riboflavin. The polypeptide is 6,7-dimethyl-8-ribityllumazine synthase (Clostridium perfringens (strain ATCC 13124 / DSM 756 / JCM 1290 / NCIMB 6125 / NCTC 8237 / Type A)).